Reading from the N-terminus, the 505-residue chain is Putative thymidine phosphorylase (505 aa).

It belongs to the thymidine/pyrimidine-nucleoside phosphorylase family. Type 2 subfamily.

It catalyses the reaction thymidine + phosphate = 2-deoxy-alpha-D-ribose 1-phosphate + thymine. The polypeptide is Putative thymidine phosphorylase (Hahella chejuensis (strain KCTC 2396)).